The primary structure comprises 156 residues: uncharacterized protein (156 aa).

To L.lactis TrpF C-terminal region.

This is an uncharacterized protein from Bacillus subtilis (strain 168).